A 711-amino-acid polypeptide reads, in one-letter code: Constitutive ornithine decarboxylase (711 aa).

The residue at position 347 (Lys-347) is an N6-(pyridoxal phosphate)lysine.

The protein belongs to the Orn/Lys/Arg decarboxylase class-I family. It depends on pyridoxal 5'-phosphate as a cofactor.

The catalysed reaction is L-ornithine + H(+) = putrescine + CO2. The protein operates within amine and polyamine biosynthesis; putrescine biosynthesis via L-ornithine pathway; putrescine from L-ornithine: step 1/1. In Escherichia coli (strain K12), this protein is Constitutive ornithine decarboxylase (speC).